Consider the following 425-residue polypeptide: Glutamate-1-semialdehyde 2,1-aminomutase (425 aa).

The residue at position 264 (lysine 264) is an N6-(pyridoxal phosphate)lysine.

It belongs to the class-III pyridoxal-phosphate-dependent aminotransferase family. HemL subfamily. As to quaternary structure, homodimer. The cofactor is pyridoxal 5'-phosphate.

The protein resides in the cytoplasm. The catalysed reaction is (S)-4-amino-5-oxopentanoate = 5-aminolevulinate. The protein operates within porphyrin-containing compound metabolism; protoporphyrin-IX biosynthesis; 5-aminolevulinate from L-glutamyl-tRNA(Glu): step 2/2. The polypeptide is Glutamate-1-semialdehyde 2,1-aminomutase (Hydrogenobaculum sp. (strain Y04AAS1)).